Reading from the N-terminus, the 469-residue chain is UDP-N-acetylmuramoylalanine--D-glutamate ligase (469 aa).

An ATP-binding site is contributed by 123-129 (GTNGKST).

Belongs to the MurCDEF family.

It is found in the cytoplasm. It carries out the reaction UDP-N-acetyl-alpha-D-muramoyl-L-alanine + D-glutamate + ATP = UDP-N-acetyl-alpha-D-muramoyl-L-alanyl-D-glutamate + ADP + phosphate + H(+). The protein operates within cell wall biogenesis; peptidoglycan biosynthesis. Functionally, cell wall formation. Catalyzes the addition of glutamate to the nucleotide precursor UDP-N-acetylmuramoyl-L-alanine (UMA). This is UDP-N-acetylmuramoylalanine--D-glutamate ligase from Caulobacter sp. (strain K31).